The sequence spans 130 residues: General stress protein 13 (130 aa).

One can recognise an S1 motif domain in the interval 8–77 (GSVYTGKVTG…EKGKISLSIR (70 aa)). The tract at residues 76-109 (IRATQAAPEKKESKPRKPKAAQVSEEASTPQGFN) is disordered. The span at 100–109 (EEASTPQGFN) shows a compositional bias: polar residues.

Found in association with the 30S subunit of the ribosome.

The protein resides in the cytoplasm. The protein is General stress protein 13 (yugI) of Bacillus subtilis (strain 168).